Consider the following 70-residue polypeptide: Large ribosomal subunit protein eL38 (70 aa).

This sequence belongs to the eukaryotic ribosomal protein eL38 family.

This Artemia franciscana (Brine shrimp) protein is Large ribosomal subunit protein eL38 (RPL38).